We begin with the raw amino-acid sequence, 372 residues long: Alanine dehydrogenase 1 (372 aa).

H94 is a catalytic residue. Position 170–200 (170–200 (TYVIFGGGVAATNAANVALGLNAKVIIIELN)) interacts with NAD(+).

It belongs to the AlaDH/PNT family.

The enzyme catalyses L-alanine + NAD(+) + H2O = pyruvate + NH4(+) + NADH + H(+). It participates in amino-acid degradation; L-alanine degradation via dehydrogenase pathway; NH(3) and pyruvate from L-alanine: step 1/1. In terms of biological role, may play a role in cell wall synthesis as L-alanine is an important constituent of the peptidoglycan layer. In Staphylococcus aureus (strain MSSA476), this protein is Alanine dehydrogenase 1 (ald1).